Consider the following 630-residue polypeptide: MDLTKIEHPRVVKTMSIPQLKQLSADIRRFLIEKLSKTGGHIGPNLGVVELTIALHREFDSPKDKLIWDVGHQSYVHKILTGRAAEFDTLRQYKGLSGFPKRSESEHDVWETGHSSTSLSAAMGMAIARDLKGTDEYIVPIIGDGALTGGMALEALNHIGHEKTDMIVILNDNEMSIAPNVGALHNILGRLRTAGKYQWVKDELELLLKRIPAVGGKLAATAERLKDSLKYLLVSGVFFEELGFTYLGPVDGHDFEDLLENLRYAKKVKGPVLVHVITKKGKGYSPAENDKVGTWHGTGPYKIETGTFVKTKEGGPSWSGLVSETVRRIARTDPRIVAITPAMPVGSKLEGFASEFPDRMFDVGIAEQHATTLAAGLATQGMKPFLAIYSTFLQRAYDQVVHDVCRQNLNVFFAIDRAGLVGADGETHQGVFDIAFLRHVPNLVLMMPKDENEGQHMVYTALRYDDGPIAMRFPRGNGLGVPLDEELKEIPIGTWEVLRDGSDAVILTFGTTISMALEAAEQLARDGVSVKVVNARFLKPMDEAMLHELLESRLPILTIEEAVLQGGFGSSVLEFAHDHGYHQAVIERMGIPDRFIEHGSVSELLDEIGLTAAHVADRIKTIMPRKQKRA.

Thiamine diphosphate is bound by residues histidine 72 and 113 to 115 (GHS). Aspartate 144 contributes to the Mg(2+) binding site. Thiamine diphosphate-binding positions include 145–146 (GA), asparagine 173, tyrosine 284, and glutamate 367. Asparagine 173 lines the Mg(2+) pocket.

Belongs to the transketolase family. DXPS subfamily. In terms of assembly, homodimer. It depends on Mg(2+) as a cofactor. The cofactor is thiamine diphosphate.

The enzyme catalyses D-glyceraldehyde 3-phosphate + pyruvate + H(+) = 1-deoxy-D-xylulose 5-phosphate + CO2. It functions in the pathway metabolic intermediate biosynthesis; 1-deoxy-D-xylulose 5-phosphate biosynthesis; 1-deoxy-D-xylulose 5-phosphate from D-glyceraldehyde 3-phosphate and pyruvate: step 1/1. Functionally, catalyzes the acyloin condensation reaction between C atoms 2 and 3 of pyruvate and glyceraldehyde 3-phosphate to yield 1-deoxy-D-xylulose-5-phosphate (DXP). This chain is 1-deoxy-D-xylulose-5-phosphate synthase, found in Geobacillus thermodenitrificans (strain NG80-2).